The primary structure comprises 185 residues: Peptidyl-tRNA hydrolase (185 aa).

Tyrosine 14 is a binding site for tRNA. Histidine 19 (proton acceptor) is an active-site residue. Positions 64, 66, and 112 each coordinate tRNA.

This sequence belongs to the PTH family. Monomer.

Its subcellular location is the cytoplasm. It carries out the reaction an N-acyl-L-alpha-aminoacyl-tRNA + H2O = an N-acyl-L-amino acid + a tRNA + H(+). Functionally, hydrolyzes ribosome-free peptidyl-tRNAs (with 1 or more amino acids incorporated), which drop off the ribosome during protein synthesis, or as a result of ribosome stalling. Catalyzes the release of premature peptidyl moieties from peptidyl-tRNA molecules trapped in stalled 50S ribosomal subunits, and thus maintains levels of free tRNAs and 50S ribosomes. In Shouchella clausii (strain KSM-K16) (Alkalihalobacillus clausii), this protein is Peptidyl-tRNA hydrolase.